The sequence spans 356 residues: Uroporphyrinogen decarboxylase (356 aa).

Residues 27–31 (RQAGR), D77, Y154, T209, and H327 contribute to the substrate site.

Belongs to the uroporphyrinogen decarboxylase family. As to quaternary structure, homodimer.

Its subcellular location is the cytoplasm. The catalysed reaction is uroporphyrinogen III + 4 H(+) = coproporphyrinogen III + 4 CO2. Its pathway is porphyrin-containing compound metabolism; protoporphyrin-IX biosynthesis; coproporphyrinogen-III from 5-aminolevulinate: step 4/4. In terms of biological role, catalyzes the decarboxylation of four acetate groups of uroporphyrinogen-III to yield coproporphyrinogen-III. This Hahella chejuensis (strain KCTC 2396) protein is Uroporphyrinogen decarboxylase.